A 159-amino-acid polypeptide reads, in one-letter code: Phosphopantetheine adenylyltransferase (159 aa).

Thr-10 serves as a coordination point for substrate. Residues 10-11 and His-18 contribute to the ATP site; that span reads TF. Substrate contacts are provided by Lys-42, Leu-73, and Arg-87. ATP contacts are provided by residues 88–90, Glu-98, and 123–129; these read GLR and YSYVSGT.

It belongs to the bacterial CoaD family. In terms of assembly, homohexamer. Mg(2+) is required as a cofactor.

Its subcellular location is the cytoplasm. The catalysed reaction is (R)-4'-phosphopantetheine + ATP + H(+) = 3'-dephospho-CoA + diphosphate. Its pathway is cofactor biosynthesis; coenzyme A biosynthesis; CoA from (R)-pantothenate: step 4/5. Its function is as follows. Reversibly transfers an adenylyl group from ATP to 4'-phosphopantetheine, yielding dephospho-CoA (dPCoA) and pyrophosphate. The protein is Phosphopantetheine adenylyltransferase of Coxiella burnetii (strain CbuK_Q154) (Coxiella burnetii (strain Q154)).